Reading from the N-terminus, the 202-residue chain is Recombination protein RecR (202 aa).

The C4-type zinc-finger motif lies at 57–72 (CRDCRTFTEDDICAVC). Positions 81 to 176 (GQICVVESPA…PATRIAHGVP (96 aa)) constitute a Toprim domain.

The protein belongs to the RecR family.

In terms of biological role, may play a role in DNA repair. It seems to be involved in an RecBC-independent recombinational process of DNA repair. It may act with RecF and RecO. The chain is Recombination protein RecR from Photobacterium profundum (strain SS9).